The sequence spans 171 residues: Probable chemoreceptor glutamine deamidase CheD 1 (171 aa).

Over residues 1–18 the composition is skewed to low complexity; the sequence is MTRTTGAAPDRAAPAAGE. The disordered stretch occupies residues 1-23; it reads MTRTTGAAPDRAAPAAGETPGGG.

It belongs to the CheD family.

The catalysed reaction is L-glutaminyl-[protein] + H2O = L-glutamyl-[protein] + NH4(+). In terms of biological role, probably deamidates glutamine residues to glutamate on methyl-accepting chemotaxis receptors (MCPs), playing an important role in chemotaxis. This Anaeromyxobacter dehalogenans (strain 2CP-C) protein is Probable chemoreceptor glutamine deamidase CheD 1.